The chain runs to 462 residues: ESX-1 secretion system protein EccE1 (462 aa).

2 helical membrane passes run Phe-9–Leu-29 and Trp-34–Gly-54.

This sequence belongs to the EccE family. In terms of assembly, part of the ESX-1 / type VII secretion system (T7SS), which is composed of cytosolic and membrane components. The ESX-1 membrane complex is composed of EccB1, EccCa1, EccCb1, EccD1 and EccE1.

The protein resides in the cell inner membrane. In terms of biological role, part of the ESX-1 specialized secretion system, which delivers several virulence factors to host cells during infection, including the key virulence factors EsxA (ESAT-6) and EsxB (CFP-10). In Mycobacterium tuberculosis (strain CDC 1551 / Oshkosh), this protein is ESX-1 secretion system protein EccE1.